A 216-amino-acid polypeptide reads, in one-letter code: Probable nicotinate-nucleotide adenylyltransferase (216 aa).

The protein belongs to the NadD family.

It carries out the reaction nicotinate beta-D-ribonucleotide + ATP + H(+) = deamido-NAD(+) + diphosphate. Its pathway is cofactor biosynthesis; NAD(+) biosynthesis; deamido-NAD(+) from nicotinate D-ribonucleotide: step 1/1. Catalyzes the reversible adenylation of nicotinate mononucleotide (NaMN) to nicotinic acid adenine dinucleotide (NaAD). This is Probable nicotinate-nucleotide adenylyltransferase from Desulfatibacillum aliphaticivorans.